We begin with the raw amino-acid sequence, 157 residues long: Cyclic pyranopterin monophosphate synthase (157 aa).

Substrate is bound by residues 74 to 76 (MCH) and 112 to 113 (ME). The active site involves Asp-127.

It belongs to the MoaC family. Homohexamer; trimer of dimers.

The enzyme catalyses (8S)-3',8-cyclo-7,8-dihydroguanosine 5'-triphosphate = cyclic pyranopterin phosphate + diphosphate. It participates in cofactor biosynthesis; molybdopterin biosynthesis. In terms of biological role, catalyzes the conversion of (8S)-3',8-cyclo-7,8-dihydroguanosine 5'-triphosphate to cyclic pyranopterin monophosphate (cPMP). The polypeptide is Cyclic pyranopterin monophosphate synthase (Campylobacter jejuni subsp. jejuni serotype O:6 (strain 81116 / NCTC 11828)).